The chain runs to 606 residues: Radial spoke head protein 3 homolog (606 aa).

The disordered stretch occupies residues 1-103 (MARSEARRQA…NSPEAPPLDG (103 aa)). Residues 15-46 (PRAVPEERALRERRQPRPRREPLESGAGDHRR) are compositionally biased toward basic and acidic residues. Thr331 is modified (phosphothreonine; by MAPK1). The stretch at 393–429 (AYEELRNIELAEVQRLEEQERRHREEKERRKQQQWQV) forms a coiled coil. Residues 520–606 (EGRHASVRPE…KSSKREELSQ (87 aa)) are disordered. A compositionally biased stretch (polar residues) spans 547-556 (SQDQGASQAQ). Residues 572 to 604 (ARYAERVSSQERRLAEENDELTEMRKSSKREEL) adopt a coiled-coil conformation. Positions 573–606 (RYAERVSSQERRLAEENDELTEMRKSSKREELSQ) are enriched in basic and acidic residues.

Belongs to the flagellar radial spoke RSP3 family. Component of the axonemal radial spoke 1 (RS1) and 2 (RS2) complexes, at least composed of spoke head proteins RSPH1, RSPH3, RSPH9 and the cilia-specific component RSPH4A or sperm-specific component RSPH6A, spoke stalk proteins RSPH14, DNAJB13, DYDC1, ROPN1L and NME5, and the RS1 complex-specific anchor protein IQUB. Interacts with IQUB. Interacts with phosphorylated MAPK1. Interacts with MEK1. Interacts with PKA regulatory subunits PRKAR1A and PRKAR1B. Interacts with RSPH1. Interacts with RSPH4A. Interacts with RSPH6A. Interacts with RSPH9. Interacts with LRRC23.

Its subcellular location is the cytoplasm. The protein resides in the cytoskeleton. The protein localises to the cilium axoneme. It is found in the flagellum axoneme. Functions as part of axonemal radial spoke complexes that play an important part in the motility of sperm and cilia. Functions as a protein kinase A-anchoring protein that scaffolds the cAMP-dependent protein kinase holoenzyme. May serve as a point of convergence for MAPK and PKA signaling in cilia. The polypeptide is Radial spoke head protein 3 homolog (RSPH3) (Bos taurus (Bovine)).